The primary structure comprises 845 residues: SLIT and NTRK-like protein 2 (845 aa).

The first 21 residues, Met-1–Ser-21, serve as a signal peptide directing secretion. Residues Arg-22–Leu-621 lie on the Extracellular side of the membrane. Intrachain disulfides connect Cys-29–Cys-35 and Cys-33–Cys-46. 6 LRR repeats span residues Arg-63–Asn-84, Asn-87–Gly-108, Thr-111–Gly-132, Ser-135–Lys-156, Lys-159–Phe-180, and Leu-182–Glu-203. N-linked (GlcNAc...) asparagine glycosylation is present at Asn-84. Residues Asp-167–Glu-215 form a required for interaction with PTPRD region. The LRRCT 1 domain occupies Asn-216–Arg-265. Disulfide bonds link Cys-220-Cys-243 and Cys-222-Cys-263. Residues Cys-263–Arg-321 are disordered. A compositionally biased stretch (polar residues) spans Gln-283–Leu-293. An LRRNT domain is found at Gln-331 to Lys-373. LRR repeat units follow at residues Ser-376 to Glu-397, Ser-400 to Asn-421, Ser-424 to Gly-445, Ser-448 to Ala-469, Asn-472 to Gly-493, and Ala-495 to Asp-516. N-linked (GlcNAc...) asparagine glycosylation is present at Asn-421. An LRRCT 2 domain is found at Asn-529 to Asp-580. The chain crosses the membrane as a helical span at residues Ile-622–Phe-642. Topologically, residues Val-643–Leu-845 are cytoplasmic. Tyr-756 carries the phosphotyrosine modification.

Belongs to the SLITRK family. Interacts with PTPRD; this interaction is PTPRD splicing-dependent and may induce pre-synaptic differentiation. Interacts with NTRK2. Expressed predominantly in the cerebral cortex of the brain but also at low levels in the spinal cord and medulla. Also expressed in some astrocytic brain tumors such as astrocytomas, oligodendrogliomas, glioblastomas, gangliogliomas and primitive neuroectodermal tumors.

The protein localises to the membrane. Its subcellular location is the cell membrane. It is found in the cell projection. It localises to the dendrite. Functionally, it is involved in synaptogenesis and promotes excitatory synapse differentiation. Suppresses neurite outgrowth. Involved in the negative regulation of NTRK2. This chain is SLIT and NTRK-like protein 2 (SLITRK2), found in Homo sapiens (Human).